The primary structure comprises 382 residues: Dual-specificity RNA methyltransferase RlmN (382 aa).

The Proton acceptor role is filled by glutamate 95. One can recognise a Radical SAM core domain in the interval 101-347; sequence EDDRGTLCIS…TTVRKTRGDD (247 aa). The cysteines at positions 108 and 352 are disulfide-linked. [4Fe-4S] cluster-binding residues include cysteine 115, cysteine 119, and cysteine 122. Residues 178–179, serine 210, 232–234, and asparagine 309 each bind S-adenosyl-L-methionine; these read GE and SLH. Cysteine 352 (S-methylcysteine intermediate) is an active-site residue.

Belongs to the radical SAM superfamily. RlmN family. [4Fe-4S] cluster is required as a cofactor.

Its subcellular location is the cytoplasm. It carries out the reaction adenosine(2503) in 23S rRNA + 2 reduced [2Fe-2S]-[ferredoxin] + 2 S-adenosyl-L-methionine = 2-methyladenosine(2503) in 23S rRNA + 5'-deoxyadenosine + L-methionine + 2 oxidized [2Fe-2S]-[ferredoxin] + S-adenosyl-L-homocysteine. The catalysed reaction is adenosine(37) in tRNA + 2 reduced [2Fe-2S]-[ferredoxin] + 2 S-adenosyl-L-methionine = 2-methyladenosine(37) in tRNA + 5'-deoxyadenosine + L-methionine + 2 oxidized [2Fe-2S]-[ferredoxin] + S-adenosyl-L-homocysteine. In terms of biological role, specifically methylates position 2 of adenine 2503 in 23S rRNA and position 2 of adenine 37 in tRNAs. m2A2503 modification seems to play a crucial role in the proofreading step occurring at the peptidyl transferase center and thus would serve to optimize ribosomal fidelity. The chain is Dual-specificity RNA methyltransferase RlmN from Bordetella avium (strain 197N).